Consider the following 449-residue polypeptide: Phosphomethylpyrimidine synthase (449 aa).

Substrate contacts are provided by residues asparagine 80, methionine 109, tyrosine 138, histidine 173, 193 to 195, 234 to 237, and glutamate 273; these read SRG and DSLR. Histidine 277 provides a ligand contact to Zn(2+). Substrate is bound at residue tyrosine 300. Residue histidine 341 participates in Zn(2+) binding. [4Fe-4S] cluster is bound by residues cysteine 421, cysteine 424, and cysteine 429.

It belongs to the ThiC family. In terms of assembly, homodimer. The cofactor is [4Fe-4S] cluster.

It carries out the reaction 5-amino-1-(5-phospho-beta-D-ribosyl)imidazole + S-adenosyl-L-methionine = 4-amino-2-methyl-5-(phosphooxymethyl)pyrimidine + CO + 5'-deoxyadenosine + formate + L-methionine + 3 H(+). It functions in the pathway cofactor biosynthesis; thiamine diphosphate biosynthesis. Catalyzes the synthesis of the hydroxymethylpyrimidine phosphate (HMP-P) moiety of thiamine from aminoimidazole ribotide (AIR) in a radical S-adenosyl-L-methionine (SAM)-dependent reaction. This is Phosphomethylpyrimidine synthase from Campylobacter hominis (strain ATCC BAA-381 / DSM 21671 / CCUG 45161 / LMG 19568 / NCTC 13146 / CH001A).